The sequence spans 141 residues: MKFISKVHGEITYDEKNIIIFNKGILGFDELKRFILIELEEYEPFKLLHSLEDDGVGLIVTSPYDFFEDYELKLSEDIINNLKIEMPKDVMVITTITLNSEAKKITTNLQGPIIINISNNLGEQIILDNSKYKIKQPLIGE.

It belongs to the FliW family. In terms of assembly, interacts with translational regulator CsrA and flagellin(s).

It localises to the cytoplasm. In terms of biological role, acts as an anti-CsrA protein, binds CsrA and prevents it from repressing translation of its target genes, one of which is flagellin. Binds to flagellin and participates in the assembly of the flagellum. The chain is Flagellar assembly factor FliW from Clostridium beijerinckii (strain ATCC 51743 / NCIMB 8052) (Clostridium acetobutylicum).